The following is a 252-amino-acid chain: Transmembrane ascorbate-dependent reductase CYB561 (252 aa).

Met-1 carries the N-acetylmethionine modification. The Cytoplasmic portion of the chain corresponds to 1–17 (MEGPASPAPAPGALPYY). Residues 18–38 (VAFSQLLGLTVVAMTGAWLGM) traverse the membrane as a helical segment. Residues 20–221 (FSQLLGLTVV…FATVVLYILT (202 aa)) enclose the Cytochrome b561 domain. Topologically, residues 39–52 (YRGGIAWESALQFN) are vesicular. A helical transmembrane segment spans residues 53–73 (VHPLCMVIGLVFLQGDALLVY). 3 residues coordinate heme b: His-54, Arg-74, and Lys-81. Over 74 to 86 (RVFRNEAKRTTKV) the chain is Cytoplasmic. The L-ascorbate site is built by Lys-81 and Lys-85. The helical transmembrane segment at 87 to 107 (LHGLLHVFAFVIALVGLVAVF) threads the bilayer. Residues His-88, 117–120 (DLYS), and His-122 contribute to the heme b site. The Vesicular portion of the chain corresponds to 108 to 125 (EHHRKKGYADLYSLHSWC). Residues 126-146 (GILVFALFFAQWLVGFSFFLF) traverse the membrane as a helical segment. Residues 147 to 159 (PGASFSLRSRYRP) lie on the Cytoplasmic side of the membrane. Position 154 (Arg-154) interacts with L-ascorbate. A helical membrane pass occupies residues 160–180 (QHVFFGAAIFLLSVATALLGL). His-161 and Glu-182 together coordinate heme b. Topologically, residues 181 to 199 (KEALLFELGTKYSTFEPEG) are vesicular. A helical membrane pass occupies residues 200–220 (VLANVLGLLLAAFATVVLYIL). Residues 221–252 (TRADWKRPLQAEEQALSMDFKTLTEGDSPSSQ) are Cytoplasmic-facing. Lys-226 lines the heme b pocket. Phosphoserine is present on residues Ser-248 and Ser-250.

Heme b serves as cofactor.

It localises to the cytoplasmic vesicle. It is found in the secretory vesicle. The protein localises to the chromaffin granule membrane. The enzyme catalyses monodehydro-L-ascorbate radical(out) + L-ascorbate(in) = monodehydro-L-ascorbate radical(in) + L-ascorbate(out). Functionally, transmembrane reductase that uses ascorbate as an electron donor in the cytoplasm and transfers electrons across membranes to reduce monodehydro-L-ascorbate radical in the lumen of secretory vesicles. It is therefore involved the regeneration and homeostasis within secretory vesicles of ascorbate which in turn provides reducing equivalents needed to support the activity of intravesicular enzymes. The chain is Transmembrane ascorbate-dependent reductase CYB561 (CYB561) from Ovis aries (Sheep).